Reading from the N-terminus, the 124-residue chain is Small ribosomal subunit protein uS12 (124 aa).

The disordered stretch occupies residues 1–22 (MATINQLVRKPRKRKVAKSDVP). At Asp-89 the chain carries 3-methylthioaspartic acid. Residues 101-124 (TLDTQGVQNRKQGRSKYGAKRPKS) form a disordered region. Positions 111–124 (KQGRSKYGAKRPKS) are enriched in basic residues.

The protein belongs to the universal ribosomal protein uS12 family. As to quaternary structure, part of the 30S ribosomal subunit. Contacts proteins S8 and S17. May interact with IF1 in the 30S initiation complex.

With S4 and S5 plays an important role in translational accuracy. Its function is as follows. Interacts with and stabilizes bases of the 16S rRNA that are involved in tRNA selection in the A site and with the mRNA backbone. Located at the interface of the 30S and 50S subunits, it traverses the body of the 30S subunit contacting proteins on the other side and probably holding the rRNA structure together. The combined cluster of proteins S8, S12 and S17 appears to hold together the shoulder and platform of the 30S subunit. The polypeptide is Small ribosomal subunit protein uS12 (Marinobacter nauticus (strain ATCC 700491 / DSM 11845 / VT8) (Marinobacter aquaeolei)).